The chain runs to 270 residues: ATP synthase subunit a (270 aa).

The next 5 membrane-spanning stretches (helical) occupy residues 38–58, 98–118, 143–163, 208–228, and 239–259; these read VHID…GIFY, IAPL…MDLV, DVNI…YYSI, LFGN…MLPW, and AIFH…LTIV.

The protein belongs to the ATPase A chain family. F-type ATPases have 2 components, CF(1) - the catalytic core - and CF(0) - the membrane proton channel. CF(1) has five subunits: alpha(3), beta(3), gamma(1), delta(1), epsilon(1). CF(0) has three main subunits: a(1), b(2) and c(9-12). The alpha and beta chains form an alternating ring which encloses part of the gamma chain. CF(1) is attached to CF(0) by a central stalk formed by the gamma and epsilon chains, while a peripheral stalk is formed by the delta and b chains.

The protein resides in the cell inner membrane. Functionally, key component of the proton channel; it plays a direct role in the translocation of protons across the membrane. This chain is ATP synthase subunit a, found in Vibrio alginolyticus.